Reading from the N-terminus, the 629-residue chain is Acetylcholinesterase (629 aa).

An N-terminal signal peptide occupies residues Met1–His38. A disulfide bond links Cys103 and Cys130. An N-linked (GlcNAc...) asparagine glycan is attached at Asn125. Ser253 functions as the Acyl-ester intermediate in the catalytic mechanism. A disulfide bond links Cys307 and Cys322. Asn308 carries N-linked (GlcNAc...) asparagine glycosylation. Catalysis depends on Glu382, which acts as the Charge relay system. The N-linked (GlcNAc...) asparagine glycan is linked to Asn418. A disulfide bridge connects residues Cys458 and Cys574. Catalysis depends on His496, which acts as the Charge relay system. Asn509 carries N-linked (GlcNAc...) asparagine glycosylation. Residue Ser605 is the site of GPI-anchor amidated serine attachment. Positions Ser606 to Leu629 are cleaved as a propeptide — removed in mature form.

It belongs to the type-B carboxylesterase/lipase family. In terms of assembly, homodimer; disulfide-linked. In terms of processing, the N-terminus is blocked.

It is found in the synapse. Its subcellular location is the cell membrane. It carries out the reaction acetylcholine + H2O = choline + acetate + H(+). In terms of biological role, rapidly hydrolyzes choline released into the synapse. This Leptinotarsa decemlineata (Colorado potato beetle) protein is Acetylcholinesterase.